The following is a 51-amino-acid chain: MARNKPLGKKLRLAAALKSNRNPPVWVVVKTKRRVTRSPTRRHWRRTKLKA.

It belongs to the eukaryotic ribosomal protein eL39 family.

In Pyrobaculum islandicum (strain DSM 4184 / JCM 9189 / GEO3), this protein is Large ribosomal subunit protein eL39.